The following is a 269-amino-acid chain: tRNA pseudouridine synthase A (269 aa).

Residue Asp-51 is the Nucleophile of the active site. Residue Tyr-109 participates in substrate binding.

The protein belongs to the tRNA pseudouridine synthase TruA family. Homodimer.

It catalyses the reaction uridine(38/39/40) in tRNA = pseudouridine(38/39/40) in tRNA. In terms of biological role, formation of pseudouridine at positions 38, 39 and 40 in the anticodon stem and loop of transfer RNAs. The sequence is that of tRNA pseudouridine synthase A from Haemophilus influenzae (strain PittGG).